Here is a 406-residue protein sequence, read N- to C-terminus: COP9 signalosome complex subunit 4 (406 aa).

N-acetylalanine is present on A2. An N6-acetyllysine modification is found at K25. One can recognise a PCI domain in the interval 197–366; that stretch reads YRRKFIEAAQ…GIVHFETREA (170 aa).

Belongs to the CSN4 family. In terms of assembly, component of the CSN complex, composed of COPS1/GPS1, COPS2, COPS3, COPS4, COPS5, COPS6, COPS7 (COPS7A or COPS7B), COPS8 and COPS9. In the complex, it probably interacts directly with COPS1, COPS2, COPS3, COPS5, COPS6, COPS7 (COPS7A or COPS7B) and COPS8. Interacts with TOR1A; the interaction is direct and associates TOR1A and SNAPIN with the CSN complex. Interacts with STON2; controls STON2 neddylation levels. Interacts with ERCC6.

The protein resides in the cytoplasm. Its subcellular location is the nucleus. It is found in the cytoplasmic vesicle. It localises to the secretory vesicle. The protein localises to the synaptic vesicle. Functionally, component of the COP9 signalosome complex (CSN), a complex involved in various cellular and developmental processes. The CSN complex is an essential regulator of the ubiquitin (Ubl) conjugation pathway by mediating the deneddylation of the cullin subunits of SCF-type E3 ligase complexes, leading to decrease the Ubl ligase activity of SCF-type complexes such as SCF, CSA or DDB2. Also involved in the deneddylation of non-cullin subunits such as STON2. The complex is also involved in phosphorylation of p53/TP53, c-jun/JUN, IkappaBalpha/NFKBIA, ITPK1, IRF8/ICSBP and SNAPIN, possibly via its association with CK2 and PKD kinases. CSN-dependent phosphorylation of TP53 and JUN promotes and protects degradation by the Ubl system, respectively. The protein is COP9 signalosome complex subunit 4 (COPS4) of Bos taurus (Bovine).